A 99-amino-acid polypeptide reads, in one-letter code: NADH-ubiquinone oxidoreductase chain 4L (99 aa).

The next 3 membrane-spanning stretches (helical) occupy residues 1–21, 25–45, and 56–76; these read MTIY…FFTQ, ILSL…SVAV, and VMIL…SLLV.

It belongs to the complex I subunit 4L family.

The protein resides in the mitochondrion membrane. The enzyme catalyses a ubiquinone + NADH + 5 H(+)(in) = a ubiquinol + NAD(+) + 4 H(+)(out). Its function is as follows. Core subunit of the mitochondrial membrane respiratory chain NADH dehydrogenase (Complex I) that is believed to belong to the minimal assembly required for catalysis. Complex I functions in the transfer of electrons from NADH to the respiratory chain. The immediate electron acceptor for the enzyme is believed to be ubiquinone. This Albinaria caerulea (Land snail) protein is NADH-ubiquinone oxidoreductase chain 4L (ND4L).